We begin with the raw amino-acid sequence, 185 residues long: ATP-dependent protease subunit HslV (185 aa).

Residue Thr12 is part of the active site. Residues Ala168, Cys171, and Thr174 each coordinate Na(+).

It belongs to the peptidase T1B family. HslV subfamily. A double ring-shaped homohexamer of HslV is capped on each side by a ring-shaped HslU homohexamer. The assembly of the HslU/HslV complex is dependent on binding of ATP.

The protein resides in the cytoplasm. It carries out the reaction ATP-dependent cleavage of peptide bonds with broad specificity.. Allosterically activated by HslU binding. Protease subunit of a proteasome-like degradation complex believed to be a general protein degrading machinery. The protein is ATP-dependent protease subunit HslV of Ruegeria pomeroyi (strain ATCC 700808 / DSM 15171 / DSS-3) (Silicibacter pomeroyi).